The primary structure comprises 367 residues: Outer membrane porin C (367 aa).

Residues 1–21 form the signal peptide; that stretch reads MKVKVLSLLVPALLVAGAANA.

Belongs to the Gram-negative porin family. Homotrimer.

The protein resides in the cell outer membrane. Functionally, forms pores that allow passive diffusion of small molecules across the outer membrane. This is Outer membrane porin C (ompC) from Escherichia coli O157:H7.